A 190-amino-acid polypeptide reads, in one-letter code: Putative cyclic ADP-D-ribose synthase ThsB (190 aa).

Belongs to the Thoeris B TIR-like family. As to quaternary structure, homodimer.

It is found in the cytoplasm. Its activity is regulated as follows. Activated upon phage infection. TIR-like domain-containing component of the Thoeris antiviral defense system, composed of ThsA and ThsB. Expression of ThsA and ThsB in B.subtilis (strain BEST7003) confers resistance to phages SBSphiC, SBSphiJ and SPO1. Phage infection activates this protein, generating a signal molecule that in turn activates ThsA. In terms of biological role, probably hydrolyzes NAD(+) to make a cyclic ADP-D-ribose (cADPR) signaling molecule; might make 3'cADPR. The sequence is that of Putative cyclic ADP-D-ribose synthase ThsB from Bacillus amyloliquefaciens (strain Y2) (Bacillus amyloliquefaciens subsp. plantarum (strain B9601-Y2)).